Here is a 291-residue protein sequence, read N- to C-terminus: tRNA dimethylallyltransferase (291 aa).

Position 9–16 (9–16 (GPTASGKT)) interacts with ATP. 11 to 16 (TASGKT) lines the substrate pocket. An interaction with substrate tRNA region spans residues 34–37 (DSLQ).

This sequence belongs to the IPP transferase family. As to quaternary structure, monomer. It depends on Mg(2+) as a cofactor.

It carries out the reaction adenosine(37) in tRNA + dimethylallyl diphosphate = N(6)-dimethylallyladenosine(37) in tRNA + diphosphate. Functionally, catalyzes the transfer of a dimethylallyl group onto the adenine at position 37 in tRNAs that read codons beginning with uridine, leading to the formation of N6-(dimethylallyl)adenosine (i(6)A). The protein is tRNA dimethylallyltransferase of Onion yellows phytoplasma (strain OY-M).